We begin with the raw amino-acid sequence, 391 residues long: UPF0229 protein CLL_A3091 (391 aa).

Disordered stretches follow at residues 1–23 (MAIF…DKRR) and 75–107 (VATG…GNEE). The span at 80–92 (GEEKRGDKIESGS) shows a compositional bias: basic and acidic residues.

This sequence belongs to the UPF0229 family.

The protein is UPF0229 protein CLL_A3091 of Clostridium botulinum (strain Eklund 17B / Type B).